Consider the following 761-residue polypeptide: Protein spire homolog 1 (761 aa).

2 disordered regions span residues 1 to 23 (MTDG…ARPE) and 160 to 183 (DCPD…AEVS). Residues 36-223 (LCLEEILTLY…RALYAETKEL (188 aa)) enclose the KIND domain. The span at 160 to 180 (DCPDEGYEATEEEDEGEEENA) shows a compositional bias: acidic residues. Residues 218–246 (AETKELRTFLEKIKSAKENLRKMEGETEE) are a coiled coil. WH2 domains are found at residues 295–313 (PYEM…LRKV) and 359–376 (LHER…LRPV). 2 disordered regions span residues 375 to 406 (PVSP…DIPD) and 419 to 539 (ANGT…KSLA). Positions 469-480 (SSSSISTSLVED) are enriched in low complexity. Basic and acidic residues predominate over residues 504-520 (PDKRIAPQRRHSIEKEA). The interval 557-577 (LTLTVEEVMHIRQVLVKAELE) is spir-box. Disordered stretches follow at residues 630–694 (PSKP…DELE) and 728–761 (STKR…IKEV). The segment covering 636–647 (SLPISSLGPSIL) has biased composition (low complexity). Residues 682-693 (KHGDRSSSKDEL) show a composition bias toward basic and acidic residues. Over residues 728–739 (STKRARLHRRTH) the composition is skewed to basic residues. The segment covering 740–749 (SVYSSSTSSS) has biased composition (low complexity).

It belongs to the spire family.

The protein resides in the cytoplasm. It localises to the cytoskeleton. The protein localises to the cytosol. Its subcellular location is the cleavage furrow. It is found in the perinuclear region. The protein resides in the cell membrane. It localises to the cytoplasmic vesicle membrane. Functionally, acts as an actin nucleation factor, remains associated with the slow-growing pointed end of the new filament. Involved in intracellular vesicle transport along actin fibers, providing a novel link between actin cytoskeleton dynamics and intracellular transport. Required for asymmetric spindle positioning and asymmetric cell division during meiosis. Required for normal formation of the cleavage furrow and for polar body extrusion during female germ cell meiosis. Also acts in the nucleus: together with FMN2, promotes assembly of nuclear actin filaments in response to DNA damage in order to facilitate movement of chromatin and repair factors after DNA damage. In addition, promotes innate immune signaling downstream of dsRNA sensing. Mechanistically, contributes to IRF3 phosphorylation and activation downstream of MAVS and upstream of TBK1. The polypeptide is Protein spire homolog 1 (Danio rerio (Zebrafish)).